Consider the following 231-residue polypeptide: Phosphatidylserine decarboxylase proenzyme (231 aa).

The Schiff-base intermediate with substrate; via pyruvic acid role is filled by serine 188. Serine 188 is modified (pyruvic acid (Ser); by autocatalysis).

Belongs to the phosphatidylserine decarboxylase family. PSD-A subfamily. Heterodimer of a large membrane-associated beta subunit and a small pyruvoyl-containing alpha subunit. Pyruvate serves as cofactor. In terms of processing, is synthesized initially as an inactive proenzyme. Formation of the active enzyme involves a self-maturation process in which the active site pyruvoyl group is generated from an internal serine residue via an autocatalytic post-translational modification. Two non-identical subunits are generated from the proenzyme in this reaction, and the pyruvate is formed at the N-terminus of the alpha chain, which is derived from the carboxyl end of the proenzyme. The post-translation cleavage follows an unusual pathway, termed non-hydrolytic serinolysis, in which the side chain hydroxyl group of the serine supplies its oxygen atom to form the C-terminus of the beta chain, while the remainder of the serine residue undergoes an oxidative deamination to produce ammonia and the pyruvoyl prosthetic group on the alpha chain.

The protein resides in the cell membrane. It carries out the reaction a 1,2-diacyl-sn-glycero-3-phospho-L-serine + H(+) = a 1,2-diacyl-sn-glycero-3-phosphoethanolamine + CO2. The protein operates within phospholipid metabolism; phosphatidylethanolamine biosynthesis; phosphatidylethanolamine from CDP-diacylglycerol: step 2/2. In terms of biological role, catalyzes the formation of phosphatidylethanolamine (PtdEtn) from phosphatidylserine (PtdSer). The polypeptide is Phosphatidylserine decarboxylase proenzyme (Rickettsia peacockii (strain Rustic)).